The primary structure comprises 57 residues: uncharacterized protein (57 aa).

Residues 1–57 (MANHRGGSGNFAEDRERASEAGKKGGQHSGGNFKNDPQRASEAGKKGGKSSHGKSDN) form a disordered region. Basic and acidic residues-rich tracts occupy residues 12–23 (AEDRERASEAGK) and 36–45 (DPQRASEAGK). Over residues 46–57 (KGGKSSHGKSDN) the composition is skewed to basic residues.

It belongs to the con-10 family.

This is an uncharacterized protein from Escherichia coli (strain K12).